Here is a 646-residue protein sequence, read N- to C-terminus: Threonine--tRNA ligase (646 aa).

The TGS domain maps to 1–61 (MIKITFPDGS…NEDADFVLYK (61 aa)). Residues 242–541 (DHRKIGKEMQ…LIEHTAGKFP (300 aa)) are catalytic. Zn(2+) is bound by residues Cys337, His388, and His518.

It belongs to the class-II aminoacyl-tRNA synthetase family. As to quaternary structure, homodimer. Zn(2+) is required as a cofactor.

Its subcellular location is the cytoplasm. It catalyses the reaction tRNA(Thr) + L-threonine + ATP = L-threonyl-tRNA(Thr) + AMP + diphosphate + H(+). In terms of biological role, catalyzes the attachment of threonine to tRNA(Thr) in a two-step reaction: L-threonine is first activated by ATP to form Thr-AMP and then transferred to the acceptor end of tRNA(Thr). Also edits incorrectly charged L-seryl-tRNA(Thr). The sequence is that of Threonine--tRNA ligase from Bacteroides thetaiotaomicron (strain ATCC 29148 / DSM 2079 / JCM 5827 / CCUG 10774 / NCTC 10582 / VPI-5482 / E50).